Consider the following 384-residue polypeptide: Deoxyguanosinetriphosphate triphosphohydrolase-like protein (384 aa).

Residues 62–198 (RLTHSLEVST…AALADDISYI (137 aa)) form the HD domain.

The protein belongs to the dGTPase family. Type 2 subfamily.

This is Deoxyguanosinetriphosphate triphosphohydrolase-like protein from Rickettsia rickettsii (strain Iowa).